The following is a 618-amino-acid chain: MLLQKIESPKDLKKLSIEELKKLSSEIREIIINTVENNGGHLASNLGTVELTLALHYVFDAPKDKIIWDVGHQAYTHKLITGRAKDFHTLRQYGGISGYIAPWESEYDHFAVGHAGTSLSAALGFAKARDLKGEKYKVVAVIGDGALTSGMALEALNQIGYLNTDLIVILNDNEHSISPNVGAMALYLAKLRKHPLYRFFKQTTQNLLKNSSIGKGLLAFDLKLERSLKSLLLENPMFEYLGFKYFGPFDGHDIPLLISVFKGIKDNLSCPVLIHVTTKKGIGHKDAEATPSKFHSIGSKSEKEKKVPTYTEVFGKALVELGGMYPEVVAITAAMPEGTGLSYFAQRFPERFFDVGIAEQHAVTFAAGLAKNGLKPVVAIYSTFLQRSFDQIIHDVCLQKLPITFVLDRAGIVSDDGPTHQGIFDLSYLRLIPNMVIAAPKDESELRDLLYTAINYPGPFAIRYPKGKGVGVELKNRFEKIEIGKSEIVKQGRDVLILAIGSMVYPAVEAGNILRSEGIYPTVVNVRFLKPLDILTLEELILSHNTIITVEENVITGGLFGAIAELINILKINKKVIPIGLPDKFIEQGNVQLLRDIYGLNEYKIAEKIISVLEDIKV.

Residues His-72 and 113 to 115 (GHA) contribute to the thiamine diphosphate site. A Mg(2+)-binding site is contributed by Asp-144. Thiamine diphosphate-binding positions include 145–146 (GA), Asn-173, His-284, and Glu-359. Residue Asn-173 participates in Mg(2+) binding.

The protein belongs to the transketolase family. DXPS subfamily. As to quaternary structure, homodimer. Mg(2+) serves as cofactor. Thiamine diphosphate is required as a cofactor.

It carries out the reaction D-glyceraldehyde 3-phosphate + pyruvate + H(+) = 1-deoxy-D-xylulose 5-phosphate + CO2. Its pathway is metabolic intermediate biosynthesis; 1-deoxy-D-xylulose 5-phosphate biosynthesis; 1-deoxy-D-xylulose 5-phosphate from D-glyceraldehyde 3-phosphate and pyruvate: step 1/1. Its function is as follows. Catalyzes the acyloin condensation reaction between C atoms 2 and 3 of pyruvate and glyceraldehyde 3-phosphate to yield 1-deoxy-D-xylulose-5-phosphate (DXP). The polypeptide is 1-deoxy-D-xylulose-5-phosphate synthase (Dictyoglomus turgidum (strain DSM 6724 / Z-1310)).